A 495-amino-acid polypeptide reads, in one-letter code: Glycerol kinase (495 aa).

T13 contributes to the ADP binding site. The ATP site is built by T13, T14, and S15. T13 provides a ligand contact to sn-glycerol 3-phosphate. Position 17 (R17) interacts with ADP. Positions 83, 84, 135, and 244 each coordinate sn-glycerol 3-phosphate. Residues R83, E84, Y135, D244, and Q245 each contribute to the glycerol site. Positions 266 and 309 each coordinate ADP. Residues T266, G309, Q313, and G410 each contribute to the ATP site. ADP-binding residues include G410 and N414.

Belongs to the FGGY kinase family.

It catalyses the reaction glycerol + ATP = sn-glycerol 3-phosphate + ADP + H(+). Its pathway is polyol metabolism; glycerol degradation via glycerol kinase pathway; sn-glycerol 3-phosphate from glycerol: step 1/1. With respect to regulation, inhibited by fructose 1,6-bisphosphate (FBP). In terms of biological role, key enzyme in the regulation of glycerol uptake and metabolism. Catalyzes the phosphorylation of glycerol to yield sn-glycerol 3-phosphate. In Shewanella amazonensis (strain ATCC BAA-1098 / SB2B), this protein is Glycerol kinase.